The sequence spans 130 residues: Small ribosomal subunit protein uS9 (130 aa).

Positions 108–130 are disordered; sequence PRMKERRKYGLKKARRAPQFSKR. Over residues 111-130 the composition is skewed to basic residues; it reads KERRKYGLKKARRAPQFSKR.

It belongs to the universal ribosomal protein uS9 family.

In Desulforamulus reducens (strain ATCC BAA-1160 / DSM 100696 / MI-1) (Desulfotomaculum reducens), this protein is Small ribosomal subunit protein uS9.